A 114-amino-acid polypeptide reads, in one-letter code: Large ribosomal subunit protein bL19 (114 aa).

Belongs to the bacterial ribosomal protein bL19 family.

This protein is located at the 30S-50S ribosomal subunit interface and may play a role in the structure and function of the aminoacyl-tRNA binding site. This is Large ribosomal subunit protein bL19 (rplS) from Listeria monocytogenes serovar 1/2a (strain ATCC BAA-679 / EGD-e).